The primary structure comprises 242 residues: Probable transcriptional regulatory protein Bcep18194_A5621 (242 aa).

It belongs to the TACO1 family.

Its subcellular location is the cytoplasm. The chain is Probable transcriptional regulatory protein Bcep18194_A5621 from Burkholderia lata (strain ATCC 17760 / DSM 23089 / LMG 22485 / NCIMB 9086 / R18194 / 383).